The primary structure comprises 533 residues: Probable galacturonosyltransferase 13 (533 aa).

The Cytoplasmic segment spans residues 1–40; the sequence is MQLHISPSMRSITISSSNEFIDLMKIKVAARHISYRTLFH. A helical; Signal-anchor for type II membrane protein transmembrane segment spans residues 41–61; the sequence is TILILAFLLPFVFILTAVVTL. Over 62 to 533 the chain is Lumenal; sequence EGVNKCSSFD…DFIKNCHILE (472 aa). Asn-306, Asn-396, Asn-445, and Asn-520 each carry an N-linked (GlcNAc...) asparagine glycan.

The protein belongs to the glycosyltransferase 8 family. In terms of tissue distribution, expressed in roots, inflorescences, siliques, leaves and stems. Accumulates in pollen grains.

It is found in the golgi apparatus membrane. The protein operates within glycan metabolism; pectin biosynthesis. Its function is as follows. May be involved in pectin and/or xylans biosynthesis in cell walls. Together with GAUT14, required for pollen tube growth, possibly through the regulation of pectin biosynthesis and repartition in the pollen tube wall. This chain is Probable galacturonosyltransferase 13, found in Arabidopsis thaliana (Mouse-ear cress).